Consider the following 330-residue polypeptide: ADP-L-glycero-D-manno-heptose-6-epimerase (330 aa).

NADP(+)-binding positions include 11–12, 32–33, lysine 39, lysine 54, 75–79, and asparagine 92; these read FI, DN, and EGACS. The Proton acceptor role is filled by tyrosine 139. Residue lysine 143 coordinates NADP(+). Asparagine 168 serves as a coordination point for substrate. NADP(+) is bound by residues valine 169 and lysine 177. Residue lysine 177 is the Proton acceptor of the active site. Substrate-binding positions include arginine 179, histidine 186, 200–203, arginine 213, and tyrosine 292; that span reads FGEY.

This sequence belongs to the NAD(P)-dependent epimerase/dehydratase family. HldD subfamily. Homopentamer. The cofactor is NADP(+).

It catalyses the reaction ADP-D-glycero-beta-D-manno-heptose = ADP-L-glycero-beta-D-manno-heptose. Its pathway is nucleotide-sugar biosynthesis; ADP-L-glycero-beta-D-manno-heptose biosynthesis; ADP-L-glycero-beta-D-manno-heptose from D-glycero-beta-D-manno-heptose 7-phosphate: step 4/4. Catalyzes the interconversion between ADP-D-glycero-beta-D-manno-heptose and ADP-L-glycero-beta-D-manno-heptose via an epimerization at carbon 6 of the heptose. The protein is ADP-L-glycero-D-manno-heptose-6-epimerase of Burkholderia mallei (strain NCTC 10247).